The sequence spans 294 residues: Nucleotide-binding protein Adeh_0147 (294 aa).

ATP is bound at residue 17–24; it reads GVSGSGKS. Residue 68-71 coordinates GTP; that stretch reads DARE.

This sequence belongs to the RapZ-like family.

Displays ATPase and GTPase activities. This chain is Nucleotide-binding protein Adeh_0147, found in Anaeromyxobacter dehalogenans (strain 2CP-C).